The sequence spans 148 residues: Deoxyuridine 5'-triphosphate nucleotidohydrolase (148 aa).

Residues 68–70 (RSG), asparagine 81, 85–87 (TID), and lysine 95 each bind substrate.

It belongs to the dUTPase family. The cofactor is Mg(2+).

It catalyses the reaction dUTP + H2O = dUMP + diphosphate + H(+). It participates in pyrimidine metabolism; dUMP biosynthesis; dUMP from dCTP (dUTP route): step 2/2. Functionally, this enzyme is involved in nucleotide metabolism: it produces dUMP, the immediate precursor of thymidine nucleotides and it decreases the intracellular concentration of dUTP so that uracil cannot be incorporated into DNA. This chain is Deoxyuridine 5'-triphosphate nucleotidohydrolase, found in Rickettsia felis (strain ATCC VR-1525 / URRWXCal2) (Rickettsia azadi).